The chain runs to 692 residues: Elongation factor G (692 aa).

The tr-type G domain maps to Glu8 to Thr283. Residues Ala17 to Thr24, Asp81 to His85, and Asn135 to Asp138 contribute to the GTP site.

The protein belongs to the TRAFAC class translation factor GTPase superfamily. Classic translation factor GTPase family. EF-G/EF-2 subfamily.

Its subcellular location is the cytoplasm. Its function is as follows. Catalyzes the GTP-dependent ribosomal translocation step during translation elongation. During this step, the ribosome changes from the pre-translocational (PRE) to the post-translocational (POST) state as the newly formed A-site-bound peptidyl-tRNA and P-site-bound deacylated tRNA move to the P and E sites, respectively. Catalyzes the coordinated movement of the two tRNA molecules, the mRNA and conformational changes in the ribosome. This chain is Elongation factor G, found in Citrifermentans bemidjiense (strain ATCC BAA-1014 / DSM 16622 / JCM 12645 / Bem) (Geobacter bemidjiensis).